Reading from the N-terminus, the 455-residue chain is Chromosomal replication initiator protein DnaA (455 aa).

The segment at 1–75 is domain I, interacts with DnaA modulators; sequence MDTNNNIEKE…EILSQNKVGM (75 aa). The tract at residues 75-106 is domain II; sequence MHLAHSVDVRIEVAPKIQINAQANINYKAIKT. Residues 107 to 321 are domain III, AAA+ region; that stretch reads SVKDSYTFEN…GAIIKISVNA (215 aa). Positions 151, 153, 154, and 155 each coordinate ATP. The domain IV, binds dsDNA stretch occupies residues 322 to 455; sequence NLMNAPIDLN…DKKTAFNSSE (134 aa).

This sequence belongs to the DnaA family. Oligomerizes as a right-handed, spiral filament on DNA at oriC.

Its subcellular location is the cytoplasm. Its function is as follows. Plays an essential role in the initiation and regulation of chromosomal replication. ATP-DnaA binds to the origin of replication (oriC) to initiate formation of the DNA replication initiation complex once per cell cycle. Binds the DnaA box (a 9 base pair repeat at the origin) and separates the double-stranded (ds)DNA. Forms a right-handed helical filament on oriC DNA; dsDNA binds to the exterior of the filament while single-stranded (ss)DNA is stabiized in the filament's interior. The ATP-DnaA-oriC complex binds and stabilizes one strand of the AT-rich DNA unwinding element (DUE), permitting loading of DNA polymerase. After initiation quickly degrades to an ADP-DnaA complex that is not apt for DNA replication. Binds acidic phospholipids. The polypeptide is Chromosomal replication initiator protein DnaA (Helicobacter pylori (strain G27)).